Here is a 227-residue protein sequence, read N- to C-terminus: Germin-like protein subfamily 1 member 3 (227 aa).

The first 24 residues, Met-1–Cys-24, serve as a signal peptide directing secretion. A disulfide bridge links Cys-34 with Cys-50. Positions Ser-64 to Arg-212 constitute a Cupin type-1 domain. 3 residues coordinate Mn(2+): His-109, His-111, and Glu-116. Asn-136 carries an N-linked (GlcNAc...) asparagine glycan. His-160 provides a ligand contact to Mn(2+).

Belongs to the germin family. In terms of assembly, oligomer (believed to be a pentamer but probably hexamer).

It is found in the secreted. Its subcellular location is the extracellular space. The protein resides in the apoplast. May play a role in plant defense. Probably has no oxalate oxidase activity even if the active site is conserved. This chain is Germin-like protein subfamily 1 member 3, found in Arabidopsis thaliana (Mouse-ear cress).